We begin with the raw amino-acid sequence, 353 residues long: UPF0283 membrane protein YcjF (353 aa).

Transmembrane regions (helical) follow at residues 70-90 (MVMG…VQWT), 100-120 (VALG…GSVV), and 213-233 (ESTL…FIAW).

The protein belongs to the UPF0283 family.

The protein resides in the cell inner membrane. This is UPF0283 membrane protein YcjF from Escherichia coli O127:H6 (strain E2348/69 / EPEC).